Consider the following 264-residue polypeptide: tRNA pseudouridine synthase A (264 aa).

Aspartate 52 acts as the Nucleophile in catalysis. Tyrosine 110 is a substrate binding site.

It belongs to the tRNA pseudouridine synthase TruA family. As to quaternary structure, homodimer.

It carries out the reaction uridine(38/39/40) in tRNA = pseudouridine(38/39/40) in tRNA. Its function is as follows. Formation of pseudouridine at positions 38, 39 and 40 in the anticodon stem and loop of transfer RNAs. This is tRNA pseudouridine synthase A from Wigglesworthia glossinidia brevipalpis.